We begin with the raw amino-acid sequence, 109 residues long: Flagellar hook-basal body complex protein FliE (109 aa).

It belongs to the FliE family.

The protein resides in the bacterial flagellum basal body. This is Flagellar hook-basal body complex protein FliE from Nitrosomonas eutropha (strain DSM 101675 / C91 / Nm57).